We begin with the raw amino-acid sequence, 477 residues long: Bifunctional protein HldE (477 aa).

The tract at residues 1-318 is ribokinase; it reads MKVTLPDFRR…ENAIRGRADT (318 aa). 195 to 198 is an ATP binding site; the sequence is NLSE. Aspartate 264 is an active-site residue. A cytidylyltransferase region spans residues 344-477; sequence MTNGVFDILH…INIIRQGQND (134 aa).

It in the N-terminal section; belongs to the carbohydrate kinase PfkB family. In the C-terminal section; belongs to the cytidylyltransferase family. Homodimer.

The catalysed reaction is D-glycero-beta-D-manno-heptose 7-phosphate + ATP = D-glycero-beta-D-manno-heptose 1,7-bisphosphate + ADP + H(+). It carries out the reaction D-glycero-beta-D-manno-heptose 1-phosphate + ATP + H(+) = ADP-D-glycero-beta-D-manno-heptose + diphosphate. It participates in nucleotide-sugar biosynthesis; ADP-L-glycero-beta-D-manno-heptose biosynthesis; ADP-L-glycero-beta-D-manno-heptose from D-glycero-beta-D-manno-heptose 7-phosphate: step 1/4. Its pathway is nucleotide-sugar biosynthesis; ADP-L-glycero-beta-D-manno-heptose biosynthesis; ADP-L-glycero-beta-D-manno-heptose from D-glycero-beta-D-manno-heptose 7-phosphate: step 3/4. Its function is as follows. Catalyzes the phosphorylation of D-glycero-D-manno-heptose 7-phosphate at the C-1 position to selectively form D-glycero-beta-D-manno-heptose-1,7-bisphosphate. In terms of biological role, catalyzes the ADP transfer from ATP to D-glycero-beta-D-manno-heptose 1-phosphate, yielding ADP-D-glycero-beta-D-manno-heptose. The protein is Bifunctional protein HldE of Edwardsiella ictaluri (strain 93-146).